A 475-amino-acid chain; its full sequence is MDILNDISIAAPEALLIGVALIGVLLGATFKQSFNGLSRLLGALALAGAAFLAASQSAVDASTAFNGLYKVTPFIAIAKAVSYGVGAIALLVAGGYLHRENMNKFEYTLLVMFGSAGMGVMLSANNLMTLYMGIETLSLSSYVLAAFNRDSRRSAEAGLKYFVLGALASGLLLFGCSLVYGYTGFASFEQIAAADQSIGLTFGLVLILMALSFKASAAPFHVWTPDVYEGAPTPVVTFFSTAPKLATVAVLANIMFTVFGVYEESWMLIIAIVSAISMLVGAFGGLAQNNIKRLLAYSSIANVGYALMGVAAGEVNGAASVLTYMTIYVITTLGMFGIVLAMRRRDGQVEEISDLNGLSTSRPGLAVAMTVLVFSVAGIPPMAGFLGKWVVFEAALKSELYWLVAVGVIGSVVSLGYYLRLIWAMWAKTSDEEALEPADGMVSVSIYGATILAFPVLVIWIGWMTGIIGTAAAAG.

14 helical membrane passes run 7 to 27, 40 to 60, 74 to 94, 105 to 125, 127 to 147, 161 to 181, 191 to 211, 242 to 262, 266 to 286, 295 to 315, 321 to 341, 365 to 385, 399 to 419, and 448 to 468; these read ISIAAPEALLIGVALIGVLLG, LLGALALAGAAFLAASQSAVD, FIAIAKAVSYGVGAIALLVAG, FEYTLLVMFGSAGMGVMLSAN, LMTLYMGIETLSLSSYVLAAF, YFVLGALASGLLLFGCSLVYG, IAAADQSIGLTFGLVLILMAL, APKLATVAVLANIMFTVFGVY, WMLIIAIVSAISMLVGAFGGL, LAYSSIANVGYALMGVAAGEV, VLTYMTIYVITTLGMFGIVLA, LAVAMTVLVFSVAGIPPMAGF, ELYWLVAVGVIGSVVSLGYYL, and GATILAFPVLVIWIGWMTGII.

The protein belongs to the complex I subunit 2 family. NDH-1 is composed of 14 different subunits. Subunits NuoA, H, J, K, L, M, N constitute the membrane sector of the complex.

The protein localises to the cell inner membrane. It carries out the reaction a quinone + NADH + 5 H(+)(in) = a quinol + NAD(+) + 4 H(+)(out). Functionally, NDH-1 shuttles electrons from NADH, via FMN and iron-sulfur (Fe-S) centers, to quinones in the respiratory chain. The immediate electron acceptor for the enzyme in this species is believed to be ubiquinone. Couples the redox reaction to proton translocation (for every two electrons transferred, four hydrogen ions are translocated across the cytoplasmic membrane), and thus conserves the redox energy in a proton gradient. The chain is NADH-quinone oxidoreductase subunit N from Hirschia baltica (strain ATCC 49814 / DSM 5838 / IFAM 1418).